Here is a 219-residue protein sequence, read N- to C-terminus: Ran-binding protein 1 homolog c (219 aa).

Residues 1–11 (MASTEPERENR) show a composition bias toward basic and acidic residues. 2 disordered regions span residues 1-30 (MAST…VAPI) and 160-219 (QVGK…EAST). Over residues 12–23 (EDETEVNEDEDT) the composition is skewed to acidic residues. The 136-residue stretch at 26-161 (QVAPIVRLEE…FTEIAESQQV (136 aa)) folds into the RanBD1 domain. Residues 185 to 219 (SEEKAKEAEEKEPAKEDKETKKEKVEEEKKTEAST) are compositionally biased toward basic and acidic residues.

Its subcellular location is the nucleus. It is found in the nuclear pore complex. The chain is Ran-binding protein 1 homolog c (RANBP1C) from Arabidopsis thaliana (Mouse-ear cress).